Here is a 483-residue protein sequence, read N- to C-terminus: Aspartyl/glutamyl-tRNA(Asn/Gln) amidotransferase subunit B (483 aa).

This sequence belongs to the GatB/GatE family. GatB subfamily. As to quaternary structure, heterotrimer of A, B and C subunits.

It carries out the reaction L-glutamyl-tRNA(Gln) + L-glutamine + ATP + H2O = L-glutaminyl-tRNA(Gln) + L-glutamate + ADP + phosphate + H(+). The catalysed reaction is L-aspartyl-tRNA(Asn) + L-glutamine + ATP + H2O = L-asparaginyl-tRNA(Asn) + L-glutamate + ADP + phosphate + 2 H(+). Its function is as follows. Allows the formation of correctly charged Asn-tRNA(Asn) or Gln-tRNA(Gln) through the transamidation of misacylated Asp-tRNA(Asn) or Glu-tRNA(Gln) in organisms which lack either or both of asparaginyl-tRNA or glutaminyl-tRNA synthetases. The reaction takes place in the presence of glutamine and ATP through an activated phospho-Asp-tRNA(Asn) or phospho-Glu-tRNA(Gln). In Lachnospira eligens (strain ATCC 27750 / DSM 3376 / VPI C15-48 / C15-B4) (Eubacterium eligens), this protein is Aspartyl/glutamyl-tRNA(Asn/Gln) amidotransferase subunit B.